Consider the following 94-residue polypeptide: C-X-C motif chemokine 11 (94 aa).

Positions 1 to 21 are cleaved as a signal peptide; sequence MSVKGMAIALAVILCATVVQG. Position 27 is a citrulline; by PAD2 (arginine 27). 2 disulfides stabilise this stretch: cysteine 30/cysteine 57 and cysteine 32/cysteine 74.

In terms of assembly, interacts with TNFAIP6 (via Link domain). High levels in peripheral blood leukocytes, pancreas and liver astrocytes. Moderate levels in thymus, spleen and lung. Low levels in placenta, prostate and small intestine. Also found in epidermal basal layer keratinocytes in skin disorders.

Its subcellular location is the secreted. In terms of biological role, chemotactic for interleukin-activated T-cells but not unstimulated T-cells, neutrophils or monocytes. Induces calcium release in activated T-cells. Binds to CXCR3. May play an important role in CNS diseases which involve T-cell recruitment. May play a role in skin immune responses. The sequence is that of C-X-C motif chemokine 11 (CXCL11) from Homo sapiens (Human).